The primary structure comprises 215 residues: Thiamine-phosphate synthase 1 (215 aa).

4-amino-2-methyl-5-(diphosphooxymethyl)pyrimidine-binding positions include 35-39 (QYRFE) and Asn67. Mg(2+) is bound by residues Asp68 and Asp87. Thr106 provides a ligand contact to 4-amino-2-methyl-5-(diphosphooxymethyl)pyrimidine. Residue 132–134 (TST) coordinates 2-[(2R,5Z)-2-carboxy-4-methylthiazol-5(2H)-ylidene]ethyl phosphate. 4-amino-2-methyl-5-(diphosphooxymethyl)pyrimidine is bound at residue Lys135. Gly162 contacts 2-[(2R,5Z)-2-carboxy-4-methylthiazol-5(2H)-ylidene]ethyl phosphate.

It belongs to the thiamine-phosphate synthase family. The cofactor is Mg(2+).

The enzyme catalyses 2-[(2R,5Z)-2-carboxy-4-methylthiazol-5(2H)-ylidene]ethyl phosphate + 4-amino-2-methyl-5-(diphosphooxymethyl)pyrimidine + 2 H(+) = thiamine phosphate + CO2 + diphosphate. It catalyses the reaction 2-(2-carboxy-4-methylthiazol-5-yl)ethyl phosphate + 4-amino-2-methyl-5-(diphosphooxymethyl)pyrimidine + 2 H(+) = thiamine phosphate + CO2 + diphosphate. The catalysed reaction is 4-methyl-5-(2-phosphooxyethyl)-thiazole + 4-amino-2-methyl-5-(diphosphooxymethyl)pyrimidine + H(+) = thiamine phosphate + diphosphate. It participates in cofactor biosynthesis; thiamine diphosphate biosynthesis; thiamine phosphate from 4-amino-2-methyl-5-diphosphomethylpyrimidine and 4-methyl-5-(2-phosphoethyl)-thiazole: step 1/1. Functionally, condenses 4-methyl-5-(beta-hydroxyethyl)thiazole monophosphate (THZ-P) and 2-methyl-4-amino-5-hydroxymethyl pyrimidine pyrophosphate (HMP-PP) to form thiamine monophosphate (TMP). The sequence is that of Thiamine-phosphate synthase 1 from Aquifex aeolicus (strain VF5).